A 550-amino-acid polypeptide reads, in one-letter code: Crystal protein (550 aa).

A signal peptide spans 1–19 (MNKIIILLIILLSFDIISA). A disulfide bridge links C91 with C111. N156 is a glycosylation site (N-linked (GlcNAc...) asparagine). Catalysis depends on S215, which acts as the Acyl-ester intermediate. C267 and C274 are oxidised to a cystine. Residues E340 and H443 each act as charge relay system in the active site. N-linked (GlcNAc...) asparagine glycosylation occurs at N506.

This sequence belongs to the type-B carboxylesterase/lipase family.

The protein localises to the cytoplasmic vesicle. The protein resides in the esterosome membrane. This Dictyostelium discoideum (Social amoeba) protein is Crystal protein (cryS).